The chain runs to 63 residues: uncharacterized protein (63 aa).

An N-terminal signal peptide occupies residues 1–21; the sequence is MYLSLLLILLAWTLWLGNSLA.

This is an uncharacterized protein from Haemophilus influenzae (strain ATCC 51907 / DSM 11121 / KW20 / Rd).